The primary structure comprises 65 residues: Large ribosomal subunit protein bL35 (65 aa).

Over residues 1–26 (MPKIKTHRGAAKRFSKTGTGKIKRSH) the composition is skewed to basic residues. The segment at 1-41 (MPKIKTHRGAAKRFSKTGTGKIKRSHAFTSHILTSKTRKNK) is disordered.

Belongs to the bacterial ribosomal protein bL35 family.

The sequence is that of Large ribosomal subunit protein bL35 from Geotalea daltonii (strain DSM 22248 / JCM 15807 / FRC-32) (Geobacter daltonii).